Reading from the N-terminus, the 348-residue chain is 4-hydroxy-2-oxovalerate aldolase 2 (348 aa).

The Pyruvate carboxyltransferase domain occupies 5-256; sequence LQICDSTLRD…EARIKLFDAL (252 aa). Position 13-14 (13-14) interacts with substrate; that stretch reads RD. Mn(2+) is bound at residue D14. H17 (proton acceptor) is an active-site residue. Substrate contacts are provided by S168 and H195. Residues H195 and H197 each coordinate Mn(2+).

Belongs to the 4-hydroxy-2-oxovalerate aldolase family.

The catalysed reaction is (S)-4-hydroxy-2-oxopentanoate = acetaldehyde + pyruvate. In Salinispora arenicola (strain CNS-205), this protein is 4-hydroxy-2-oxovalerate aldolase 2.